Consider the following 484-residue polypeptide: tRNA sulfurtransferase (484 aa).

The THUMP domain maps to 63–167 (REMIERLCCT…DQRLFVVHRQ (105 aa)). Residues 185–186 (LM), K267, G289, and Q298 contribute to the ATP site. A disulfide bridge links C346 with C457. A Rhodanese domain is found at 405-483 (ALAGQIVLDI…GHANVRVYRP (79 aa)). C457 functions as the Cysteine persulfide intermediate in the catalytic mechanism.

The protein belongs to the ThiI family.

It localises to the cytoplasm. The enzyme catalyses [ThiI sulfur-carrier protein]-S-sulfanyl-L-cysteine + a uridine in tRNA + 2 reduced [2Fe-2S]-[ferredoxin] + ATP + H(+) = [ThiI sulfur-carrier protein]-L-cysteine + a 4-thiouridine in tRNA + 2 oxidized [2Fe-2S]-[ferredoxin] + AMP + diphosphate. It carries out the reaction [ThiS sulfur-carrier protein]-C-terminal Gly-Gly-AMP + S-sulfanyl-L-cysteinyl-[cysteine desulfurase] + AH2 = [ThiS sulfur-carrier protein]-C-terminal-Gly-aminoethanethioate + L-cysteinyl-[cysteine desulfurase] + A + AMP + 2 H(+). Its pathway is cofactor biosynthesis; thiamine diphosphate biosynthesis. Functionally, catalyzes the ATP-dependent transfer of a sulfur to tRNA to produce 4-thiouridine in position 8 of tRNAs, which functions as a near-UV photosensor. Also catalyzes the transfer of sulfur to the sulfur carrier protein ThiS, forming ThiS-thiocarboxylate. This is a step in the synthesis of thiazole, in the thiamine biosynthesis pathway. The sulfur is donated as persulfide by IscS. The protein is tRNA sulfurtransferase of Azotobacter vinelandii (strain DJ / ATCC BAA-1303).